A 273-amino-acid polypeptide reads, in one-letter code: Diadenylate cyclase (273 aa).

The next 3 helical transmembrane spans lie at 12–32, 37–57, and 61–81; these read LANI…IMLI, AVQL…SGFF, and TVEW…IIIF. The 161-residue stretch at 82–242 folds into the DAC domain; the sequence is QPELRRALET…GGELFRDVSE (161 aa).

It belongs to the adenylate cyclase family. DacA/CdaA subfamily. In terms of assembly, probably a homodimer.

The protein localises to the cell membrane. The enzyme catalyses 2 ATP = 3',3'-c-di-AMP + 2 diphosphate. Its function is as follows. Catalyzes the condensation of 2 ATP molecules into cyclic di-AMP (c-di-AMP), a signaling compound secreted into the host's cytosol where it triggers the cytosolic surveillance pathway (CSP), a host pathway of innate immunity characterized by expression of beta interferon (IFN-beta) and coregulated genes. Overexpression increases export of c-di-AMP. c-di-AMP is a second messenger that mediates growth, cell wall stability and virulence. This Listeria monocytogenes serotype 1/2a (strain 10403S) protein is Diadenylate cyclase.